A 313-amino-acid polypeptide reads, in one-letter code: 3'-5' exoribonuclease YhaM (313 aa).

A DNA-binding region (OB) is located at residues 22-90 (SSVKGTASNG…QLKIRQIRQA (69 aa)). The HD domain maps to 163 to 279 (HVVSMLRLAK…LHQIDLMDAS (117 aa)).

It belongs to the YhaM family.

Its function is as follows. Shows a 3'-5' exoribonuclease activity. The polypeptide is 3'-5' exoribonuclease YhaM (Listeria monocytogenes serovar 1/2a (strain ATCC BAA-679 / EGD-e)).